The primary structure comprises 107 residues: Glutaredoxin 4 (107 aa).

The Glutaredoxin domain maps to 4–106; that stretch reads IDKIKQQINE…TLLKETATKH (103 aa). A glutathione-binding site is contributed by K21. Position 29 (C29) interacts with [2Fe-2S] cluster. Residues R58, F70, and 83–84 contribute to the glutathione site; that span reads CD.

This sequence belongs to the glutaredoxin family. Monothiol subfamily. Homodimer.

It localises to the cytoplasm. In terms of biological role, monothiol glutaredoxin involved in the biogenesis of iron-sulfur clusters. This chain is Glutaredoxin 4 (grxD), found in Haemophilus ducreyi (strain 35000HP / ATCC 700724).